Reading from the N-terminus, the 472-residue chain is tRNA-2-methylthio-N(6)-dimethylallyladenosine synthase (472 aa).

Residues 22–138 (RSYWITTFGC…LETLLQQVDS (117 aa)) form the MTTase N-terminal domain. Residues Cys31, Cys67, Cys101, Cys173, Cys177, and Cys180 each coordinate [4Fe-4S] cluster. One can recognise a Radical SAM core domain in the interval 159–396 (RDSAICGWVN…NALVERNARE (238 aa)). The region spanning 399 to 467 (IRYQGRTEEV…SFSLSGTPLP (69 aa)) is the TRAM domain.

Belongs to the methylthiotransferase family. MiaB subfamily. As to quaternary structure, monomer. Requires [4Fe-4S] cluster as cofactor.

It localises to the cytoplasm. It catalyses the reaction N(6)-dimethylallyladenosine(37) in tRNA + (sulfur carrier)-SH + AH2 + 2 S-adenosyl-L-methionine = 2-methylsulfanyl-N(6)-dimethylallyladenosine(37) in tRNA + (sulfur carrier)-H + 5'-deoxyadenosine + L-methionine + A + S-adenosyl-L-homocysteine + 2 H(+). Its function is as follows. Catalyzes the methylthiolation of N6-(dimethylallyl)adenosine (i(6)A), leading to the formation of 2-methylthio-N6-(dimethylallyl)adenosine (ms(2)i(6)A) at position 37 in tRNAs that read codons beginning with uridine. The sequence is that of tRNA-2-methylthio-N(6)-dimethylallyladenosine synthase from Synechococcus sp. (strain CC9902).